The primary structure comprises 288 residues: DNA repair protein RecO (288 aa).

Belongs to the RecO family.

Its function is as follows. Involved in DNA repair and RecF pathway recombination. In Trichodesmium erythraeum (strain IMS101), this protein is DNA repair protein RecO.